Consider the following 246-residue polypeptide: Ribonuclease PH (246 aa).

Residues Arg-91 and 129-131 (GTR) contribute to the phosphate site.

The protein belongs to the RNase PH family. As to quaternary structure, homohexameric ring arranged as a trimer of dimers.

The catalysed reaction is tRNA(n+1) + phosphate = tRNA(n) + a ribonucleoside 5'-diphosphate. Functionally, phosphorolytic 3'-5' exoribonuclease that plays an important role in tRNA 3'-end maturation. Removes nucleotide residues following the 3'-CCA terminus of tRNAs; can also add nucleotides to the ends of RNA molecules by using nucleoside diphosphates as substrates, but this may not be physiologically important. Probably plays a role in initiation of 16S rRNA degradation (leading to ribosome degradation) during starvation. This chain is Ribonuclease PH, found in Burkholderia cenocepacia (strain ATCC BAA-245 / DSM 16553 / LMG 16656 / NCTC 13227 / J2315 / CF5610) (Burkholderia cepacia (strain J2315)).